Reading from the N-terminus, the 372-residue chain is Glutamate 5-kinase (372 aa).

Residue Lys14 participates in ATP binding. Positions 54, 141, and 153 each coordinate substrate. 173–174 (TD) is an ATP binding site. The PUA domain occupies 280–358 (RGTLVLDDGA…DAIESLLGYS (79 aa)).

It belongs to the glutamate 5-kinase family.

It is found in the cytoplasm. The catalysed reaction is L-glutamate + ATP = L-glutamyl 5-phosphate + ADP. It functions in the pathway amino-acid biosynthesis; L-proline biosynthesis; L-glutamate 5-semialdehyde from L-glutamate: step 1/2. Functionally, catalyzes the transfer of a phosphate group to glutamate to form L-glutamate 5-phosphate. The polypeptide is Glutamate 5-kinase (Pseudomonas entomophila (strain L48)).